We begin with the raw amino-acid sequence, 446 residues long: N-succinylarginine dihydrolase (446 aa).

Substrate-binding positions include 19-28, Asn-110, and 137-138; these read AGLSFGNVAS and HR. The active site involves Glu-174. Arg-213 contributes to the substrate binding site. The active site involves His-249. Positions 251 and 364 each coordinate substrate. Cys-370 acts as the Nucleophile in catalysis.

Belongs to the succinylarginine dihydrolase family. As to quaternary structure, homodimer.

The catalysed reaction is N(2)-succinyl-L-arginine + 2 H2O + 2 H(+) = N(2)-succinyl-L-ornithine + 2 NH4(+) + CO2. The protein operates within amino-acid degradation; L-arginine degradation via AST pathway; L-glutamate and succinate from L-arginine: step 2/5. In terms of biological role, catalyzes the hydrolysis of N(2)-succinylarginine into N(2)-succinylornithine, ammonia and CO(2). This Burkholderia orbicola (strain MC0-3) protein is N-succinylarginine dihydrolase.